The primary structure comprises 245 residues: Tryptophan synthase alpha chain (245 aa).

Residues glutamate 35 and aspartate 46 each act as proton acceptor in the active site.

The protein belongs to the TrpA family. Tetramer of two alpha and two beta chains.

It carries out the reaction (1S,2R)-1-C-(indol-3-yl)glycerol 3-phosphate + L-serine = D-glyceraldehyde 3-phosphate + L-tryptophan + H2O. Its pathway is amino-acid biosynthesis; L-tryptophan biosynthesis; L-tryptophan from chorismate: step 5/5. Its function is as follows. The alpha subunit is responsible for the aldol cleavage of indoleglycerol phosphate to indole and glyceraldehyde 3-phosphate. The sequence is that of Tryptophan synthase alpha chain from Sulfurisphaera tokodaii (strain DSM 16993 / JCM 10545 / NBRC 100140 / 7) (Sulfolobus tokodaii).